The primary structure comprises 386 residues: Acetylornithine aminotransferase (386 aa).

Pyridoxal 5'-phosphate contacts are provided by residues 96–97 and phenylalanine 123; that span reads GA. Arginine 126 contacts N(2)-acetyl-L-ornithine. 208–211 contributes to the pyridoxal 5'-phosphate binding site; that stretch reads DEVQ. Lysine 237 bears the N6-(pyridoxal phosphate)lysine mark. Residue serine 265 coordinates N(2)-acetyl-L-ornithine. Threonine 266 provides a ligand contact to pyridoxal 5'-phosphate.

It belongs to the class-III pyridoxal-phosphate-dependent aminotransferase family. ArgD subfamily. Homodimer. Requires pyridoxal 5'-phosphate as cofactor.

The protein localises to the cytoplasm. The catalysed reaction is N(2)-acetyl-L-ornithine + 2-oxoglutarate = N-acetyl-L-glutamate 5-semialdehyde + L-glutamate. It functions in the pathway amino-acid biosynthesis; L-arginine biosynthesis; N(2)-acetyl-L-ornithine from L-glutamate: step 4/4. This chain is Acetylornithine aminotransferase, found in Bacillus cereus (strain ATCC 14579 / DSM 31 / CCUG 7414 / JCM 2152 / NBRC 15305 / NCIMB 9373 / NCTC 2599 / NRRL B-3711).